The chain runs to 409 residues: uncharacterized protein (409 aa).

The region spanning 1-209 (MRVFVARQPI…GHDLSTHFYS (209 aa)) is the EAL domain. The 190-residue stretch at 203-392 (LSTHFYSYYE…GNQLDKEEAY (190 aa)) folds into the HDOD domain.

This is an uncharacterized protein from Bacillus subtilis (strain 168).